The following is a 463-amino-acid chain: Mitochondrial distribution and morphology protein 10 (463 aa).

Belongs to the MDM10 family. As to quaternary structure, component of the ER-mitochondria encounter structure (ERMES) or MDM complex, composed of MMM1, MDM10, MDM12 and MDM34. Associates with the mitochondrial outer membrane sorting assembly machinery SAM(core) complex.

It is found in the mitochondrion outer membrane. Functionally, component of the ERMES/MDM complex, which serves as a molecular tether to connect the endoplasmic reticulum and mitochondria. Components of this complex are involved in the control of mitochondrial shape and protein biogenesis and may function in phospholipid exchange. MDM10 is involved in the late assembly steps of the general translocase of the mitochondrial outer membrane (TOM complex). Functions in the TOM40-specific route of the assembly of outer membrane beta-barrel proteins, including the association of TOM40 with the receptor TOM22 and small TOM proteins. Can associate with the SAM(core) complex as well as the MDM12-MMM1 complex, both involved in late steps of the major beta-barrel assembly pathway, that is responsible for biogenesis of all outer membrane beta-barrel proteins. May act as a switch that shuttles between both complexes and channels precursor proteins into the TOM40-specific pathway. Plays a role in mitochondrial morphology and in the inheritance of mitochondria. This chain is Mitochondrial distribution and morphology protein 10, found in Candida dubliniensis (strain CD36 / ATCC MYA-646 / CBS 7987 / NCPF 3949 / NRRL Y-17841) (Yeast).